The chain runs to 756 residues: Putative beta-xylosidase (756 aa).

Residues 1-18 form the signal peptide; it reads MKKLLFTFLVSTGTIFFS. The N-palmitoyl cysteine moiety is linked to residue Cys-19. Cys-19 carries S-diacylglycerol cysteine lipidation.

The protein belongs to the glycosyl hydrolase 3 family.

Its subcellular location is the cell outer membrane. In terms of biological role, glycoside hydrolase probably involved in ulvan degradation. Ulvan is the main polysaccharide component of the Ulvales (green seaweed) cell wall. It is composed of disaccharide building blocks comprising 3-sulfated rhamnose (Rha3S) linked to D-glucuronic acid (GlcA), L-iduronic acid (IduA), or D-xylose (Xyl). In Formosa agariphila (strain DSM 15362 / KCTC 12365 / LMG 23005 / KMM 3901 / M-2Alg 35-1), this protein is Putative beta-xylosidase.